A 462-amino-acid polypeptide reads, in one-letter code: Fumarate hydratase class II (462 aa).

Residues 97–99 (SGT), 127–130 (HPND), 137–139 (SSN), and threonine 185 each bind substrate. The active-site Proton donor/acceptor is the histidine 186. The active site involves serine 316. Residues serine 317 and 322 to 324 (KVN) contribute to the substrate site.

Belongs to the class-II fumarase/aspartase family. Fumarase subfamily. In terms of assembly, homotetramer.

It is found in the cytoplasm. It catalyses the reaction (S)-malate = fumarate + H2O. It functions in the pathway carbohydrate metabolism; tricarboxylic acid cycle; (S)-malate from fumarate: step 1/1. Involved in the TCA cycle. Catalyzes the stereospecific interconversion of fumarate to L-malate. The sequence is that of Fumarate hydratase class II from Bacillus anthracis.